Consider the following 625-residue polypeptide: Vacuolar-sorting receptor 2 (625 aa).

Residues 1 to 19 (MRTTNVWLVVIVWVTVGWS) form the signal peptide. The Lumenal segment spans residues 20–567 (SCTGRFVVEK…INRDARGDFS (548 aa)). The PA domain occupies 55 to 167 (QYGGSMSGAV…SLGSAIKTAI (113 aa)). N-linked (GlcNAc...) asparagine glycosylation is found at Asn-147, Asn-293, and Asn-433. 2 consecutive EGF-like domains span residues 415 to 465 (ETNE…THCE) and 468 to 515 (GALR…KECK). 7 cysteine pairs are disulfide-bonded: Cys-419–Cys-437, Cys-426–Cys-446, Cys-448–Cys-464, Cys-472–Cys-492, Cys-479–Cys-500, Cys-502–Cys-514, and Cys-544–Cys-557. Residues 516–558 (DVNECEEKTACQCRDCKCKNTWGSYECSCSGSLLYIREHDICI) form the EGF-like 3; calcium-binding domain. The chain crosses the membrane as a helical span at residues 568–588 (WGVIWIIIMGLGAAALGAYTV). Residues 589–625 (YKYRIRTYMDSEIRAIMAQYMPLDNNPNTQLSSQLEL) are Cytoplasmic-facing. The Tyrosine-based internalization motif signature appears at 608 to 611 (YMPL).

The protein belongs to the VSR (BP-80) family. As to expression, expressed only in flowers.

It is found in the membrane. It localises to the golgi apparatus membrane. Its subcellular location is the cytoplasmic vesicle. The protein localises to the clathrin-coated vesicle membrane. The protein resides in the prevacuolar compartment membrane. Functionally, vacuolar-sorting receptor (VSR) involved in clathrin-coated vesicles sorting from Golgi apparatus to vacuoles. This Arabidopsis thaliana (Mouse-ear cress) protein is Vacuolar-sorting receptor 2.